The following is a 271-amino-acid chain: uncharacterized protein (271 aa).

Belongs to the HAD-like hydrolase superfamily.

This is an uncharacterized protein from Staphylococcus aureus (strain Mu50 / ATCC 700699).